A 172-amino-acid chain; its full sequence is Shikimate kinase (172 aa).

Residue 11-16 (GAGKST) participates in ATP binding. Ser15 is a binding site for Mg(2+). Substrate is bound by residues Asp33, Arg57, and Gly79. Arg117 is an ATP binding site. Residue Arg136 participates in substrate binding. ATP is bound at residue Arg153.

It belongs to the shikimate kinase family. As to quaternary structure, monomer. Requires Mg(2+) as cofactor.

It localises to the cytoplasm. It catalyses the reaction shikimate + ATP = 3-phosphoshikimate + ADP + H(+). It participates in metabolic intermediate biosynthesis; chorismate biosynthesis; chorismate from D-erythrose 4-phosphate and phosphoenolpyruvate: step 5/7. Catalyzes the specific phosphorylation of the 3-hydroxyl group of shikimic acid using ATP as a cosubstrate. This chain is Shikimate kinase, found in Pseudomonas fluorescens (strain Pf0-1).